Reading from the N-terminus, the 443-residue chain is Protein UIP5 (443 aa).

Positions 1–27 (MSRDVRAEKLAISLLILSLFLIFQLVA) are cleaved as a signal peptide. The Perinuclear space portion of the chain corresponds to 28–398 (EIYLNNGDQY…LFKVVLTIWH (371 aa)). Residues 399–420 (YSEILLLIMGIYLFSACIRVFQ) form a helical membrane-spanning segment. Topologically, residues 421 to 443 (RRFKKIRSRRKRAGSHSVGLLPM) are cytoplasmic.

The protein resides in the nucleus membrane. The polypeptide is Protein UIP5 (UIP5) (Saccharomyces cerevisiae (strain ATCC 204508 / S288c) (Baker's yeast)).